We begin with the raw amino-acid sequence, 162 residues long: Nucleotide-binding protein AnaeK_0101 (162 aa).

Belongs to the YajQ family.

Nucleotide-binding protein. This Anaeromyxobacter sp. (strain K) protein is Nucleotide-binding protein AnaeK_0101.